A 395-amino-acid chain; its full sequence is Elongation factor Tu (395 aa).

The region spanning 10 to 204 (KEHANIGTIG…AVDDFIPTPE (195 aa)) is the tr-type G domain. The tract at residues 19-26 (GHVDHGKT) is G1. 19 to 26 (GHVDHGKT) serves as a coordination point for GTP. Thr-26 lines the Mg(2+) pocket. Residues 60–64 (GITIN) are G2. A G3 region spans residues 81 to 84 (DCPG). GTP contacts are provided by residues 81–85 (DCPGH) and 136–139 (NKVD). Residues 136–139 (NKVD) are G4. Positions 174–176 (SAL) are G5.

This sequence belongs to the TRAFAC class translation factor GTPase superfamily. Classic translation factor GTPase family. EF-Tu/EF-1A subfamily. Monomer.

The protein localises to the cytoplasm. The catalysed reaction is GTP + H2O = GDP + phosphate + H(+). In terms of biological role, GTP hydrolase that promotes the GTP-dependent binding of aminoacyl-tRNA to the A-site of ribosomes during protein biosynthesis. This Staphylococcus saprophyticus subsp. saprophyticus (strain ATCC 15305 / DSM 20229 / NCIMB 8711 / NCTC 7292 / S-41) protein is Elongation factor Tu.